The chain runs to 488 residues: Lysine--tRNA ligase (488 aa).

Positions 397 and 404 each coordinate Mg(2+).

It belongs to the class-II aminoacyl-tRNA synthetase family. Homodimer. Mg(2+) serves as cofactor.

It localises to the cytoplasm. The catalysed reaction is tRNA(Lys) + L-lysine + ATP = L-lysyl-tRNA(Lys) + AMP + diphosphate. The sequence is that of Lysine--tRNA ligase (lysS) from Mycoplasmopsis fermentans (strain ATCC 19989 / NBRC 14854 / NCTC 10117 / PG18) (Mycoplasma fermentans).